A 141-amino-acid polypeptide reads, in one-letter code: Acetyltransferase YPN_1354 (141 aa).

An N-acetyltransferase domain is found at 1–141 (MEIRIFQQDD…GKRLIVDQEY (141 aa)).

This sequence belongs to the acetyltransferase family. YpeA subfamily.

The protein is Acetyltransferase YPN_1354 of Yersinia pestis bv. Antiqua (strain Nepal516).